Reading from the N-terminus, the 337-residue chain is Holliday junction branch migration complex subunit RuvB (337 aa).

The large ATPase domain (RuvB-L) stretch occupies residues 4–185; the sequence is ADRLISNSFE…FGITQRLEYY (182 aa). Residues Ile24, Arg25, Gly66, Lys69, Thr70, Thr71, 132–134, Arg175, Tyr185, and Arg222 each bind ATP; that span reads EDY. Thr70 serves as a coordination point for Mg(2+). A small ATPAse domain (RuvB-S) region spans residues 186–256; that stretch reads KVDDLKDIVQ…TAKKALDMLD (71 aa). Residues 259–337 are head domain (RuvB-H); the sequence is SSGFDYMDRK…HFGLDIPEAR (79 aa). Residues Arg314 and Arg319 each coordinate DNA.

Belongs to the RuvB family. In terms of assembly, homohexamer. Forms an RuvA(8)-RuvB(12)-Holliday junction (HJ) complex. HJ DNA is sandwiched between 2 RuvA tetramers; dsDNA enters through RuvA and exits via RuvB. An RuvB hexamer assembles on each DNA strand where it exits the tetramer. Each RuvB hexamer is contacted by two RuvA subunits (via domain III) on 2 adjacent RuvB subunits; this complex drives branch migration. In the full resolvosome a probable DNA-RuvA(4)-RuvB(12)-RuvC(2) complex forms which resolves the HJ.

It localises to the cytoplasm. It catalyses the reaction ATP + H2O = ADP + phosphate + H(+). In terms of biological role, the RuvA-RuvB-RuvC complex processes Holliday junction (HJ) DNA during genetic recombination and DNA repair, while the RuvA-RuvB complex plays an important role in the rescue of blocked DNA replication forks via replication fork reversal (RFR). RuvA specifically binds to HJ cruciform DNA, conferring on it an open structure. The RuvB hexamer acts as an ATP-dependent pump, pulling dsDNA into and through the RuvAB complex. RuvB forms 2 homohexamers on either side of HJ DNA bound by 1 or 2 RuvA tetramers; 4 subunits per hexamer contact DNA at a time. Coordinated motions by a converter formed by DNA-disengaged RuvB subunits stimulates ATP hydrolysis and nucleotide exchange. Immobilization of the converter enables RuvB to convert the ATP-contained energy into a lever motion, pulling 2 nucleotides of DNA out of the RuvA tetramer per ATP hydrolyzed, thus driving DNA branch migration. The RuvB motors rotate together with the DNA substrate, which together with the progressing nucleotide cycle form the mechanistic basis for DNA recombination by continuous HJ branch migration. Branch migration allows RuvC to scan DNA until it finds its consensus sequence, where it cleaves and resolves cruciform DNA. This is Holliday junction branch migration complex subunit RuvB from Photobacterium profundum (strain SS9).